Reading from the N-terminus, the 148-residue chain is Large ribosomal subunit protein bL9 (148 aa).

It belongs to the bacterial ribosomal protein bL9 family.

Functionally, binds to the 23S rRNA. The chain is Large ribosomal subunit protein bL9 from Desulfatibacillum aliphaticivorans.